We begin with the raw amino-acid sequence, 1962 residues long: Sodium channel protein type 10 subunit alpha (1962 aa).

Residues 1–125 are Cytoplasmic-facing; it reads MEFPFGSLET…FNLIRRTAIK (125 aa). Positions 32–56 are disordered; sequence QAAKKAKGKHREQKDQEEKPRPQLD. The span at 33–42 shows a compositional bias: basic residues; it reads AAKKAKGKHR. Residues 43 to 55 are compositionally biased toward basic and acidic residues; it reads EQKDQEEKPRPQL. One copy of the I repeat lies at 116–414; sequence FNLIRRTAIK…VTMAYEEQNQ (299 aa). A helical membrane pass occupies residues 126-149; that stretch reads VSVHSWFSLFITVTILVNCVGMTQ. Over 150-154 the chain is Extracellular; that stretch reads TELPD. A helical membrane pass occupies residues 155 to 174; the sequence is RIEYVFTVIYTFEALIKILA. At 175–187 the chain is on the cytoplasmic side; sequence RGFCLNEFAYLRD. The chain crosses the membrane as a helical span at residues 188-206; the sequence is PWDWLDFSVITLAYIGEAT. Residues 207 to 212 are Extracellular-facing; that stretch reads ALRGIS. A helical; Voltage-sensor membrane pass occupies residues 213–232; it reads GLRTFRVLRALKTVSVIPGL. The Cytoplasmic portion of the chain corresponds to 233–248; sequence KVIVGALIHSVRKLAD. A helical membrane pass occupies residues 249–272; sequence VTILTVFCLSVFALVGLQLFKGNL. Over 273-350 the chain is Extracellular; sequence KNKCVKNCAA…PDFNYTSFDS (78 aa). A disulfide bond links Cys276 and Cys328. Asn284, Asn288, Asn321, and Asn344 each carry an N-linked (GlcNAc...) asparagine glycan. Residues 351–375 constitute an intramembrane region (pore-forming); sequence FAWAFLSLFRLMTQDSWERLYQQTL. Over 376-382 the chain is Extracellular; that stretch reads RASGKMY. A helical transmembrane segment spans residues 383–408; the sequence is MVFFVLVIFLGSFYLVNLILAVVTMA. Over 409 to 668 the chain is Cytoplasmic; sequence YEEQNQATID…TWVKLKTVLF (260 aa). Ser450, Ser453, Ser476, and Ser488 each carry phosphoserine. Polar residues predominate over residues 452–463; the sequence is HSCNGSPLPSKN. Disordered stretches follow at residues 452–493 and 521–586; these read HSCN…PYNQ and LDTS…TGEL. 2 positions are modified to phosphoserine: Ser621 and Ser624. An II repeat occupies 656–920; that stretch reads CCPTWVKLKT…DEDGEVNNLQ (265 aa). A helical transmembrane segment spans residues 669–693; sequence GIVTDPFAELTTTLCIVVNTVFMAM. The Extracellular segment spans residues 694 to 704; it reads EHHGMSSAFEA. The helical transmembrane segment at 705 to 728 threads the bilayer; sequence MLQIGNIVFTVFFTAEMVFKIIAF. At 729-736 the chain is on the cytoplasmic side; that stretch reads DPYYYFQK. The helical transmembrane segment at 737-756 threads the bilayer; sequence RWNIFDCIIVTVSLIELGAA. The Extracellular portion of the chain corresponds to 757–762; the sequence is RKGSLS. A helical; Voltage-sensor transmembrane segment spans residues 763 to 782; the sequence is VLRTFRLLRVFKLAKSWPTL. Residues 783 to 798 are Cytoplasmic-facing; that stretch reads NTLIKIIGNSVGALGN. Residues 799 to 819 form a helical membrane-spanning segment; sequence LTIILAIIVFVFALVGKQLLG. Residues 820–843 are Extracellular-facing; it reads ENYRDNRRNISAPNEEWPRWHMHD. Asn828 is a glycosylation site (N-linked (GlcNAc...) asparagine). An intramembrane region (pore-forming) is located at residues 844–864; it reads FFHSFLIVFRILCGEWIENMW. Residues 865–873 are Extracellular-facing; that stretch reads ACMEVGQKS. Cys866 and Cys875 are disulfide-bonded. The chain crosses the membrane as a helical span at residues 874–899; it reads ICLILFLTVMVLGNLVVLNLFTALLL. The Cytoplasmic portion of the chain corresponds to 900-1154; that stretch reads NSFSADNLAT…GWQVRKTCYR (255 aa). Residues 1015 to 1026 show a composition bias toward acidic residues; it reads LDDLEEDGEEDS. The tract at residues 1015 to 1035 is disordered; that stretch reads LDDLEEDGEEDSQSSQQEVIL. The stretch at 1147–1456 is one III repeat; that stretch reads QVRKTCYRIV…KKYYNAMKKL (310 aa). The chain crosses the membrane as a helical span at residues 1155 to 1178; it reads IVEHSWFESFIIFMILLSSGSLAF. Over 1179 to 1191 the chain is Extracellular; that stretch reads EDYHLDQKPTVKA. Residues 1192–1217 traverse the membrane as a helical segment; the sequence is LLEYTDRMFTFIFVLEMLLKWVAYGF. Topologically, residues 1218 to 1223 are cytoplasmic; sequence KKYFTN. Residues 1224 to 1245 traverse the membrane as a helical segment; the sequence is AWCWLDFLIVNISLISLIAKIL. The Extracellular segment spans residues 1246-1249; sequence QYSD. A helical; Voltage-sensor transmembrane segment spans residues 1250 to 1271; the sequence is VASIKALRTLRALRPLRALSRF. Residues 1272–1290 are Cytoplasmic-facing; it reads EGMRVVVDALVGAIPSIMN. Residues 1291 to 1318 traverse the membrane as a helical segment; it reads VLLVCLIFWLIFSTMGVNFFAGKFGRCI. 3 N-linked (GlcNAc...) asparagine glycosylation sites follow: Asn1319, Asn1335, and Asn1343. Residues 1319–1360 lie on the Extracellular side of the membrane; the sequence is NKTNEYFSLVPLSIVNNISDCKYQNHTGSFFWVNVKVNFDNV. Positions 1361–1382 form an intramembrane region, pore-forming; that stretch reads AMGYLALLQVATFKGWMDIMYA. At 1383–1398 the chain is on the extracellular side; sequence AVDARDVNLQPKWEDN. The helical transmembrane segment at 1399–1425 threads the bilayer; that stretch reads VYMYLYFVIFIIFGGFFTLNLFVGVII. Residues 1426 to 1478 lie on the Cytoplasmic side of the membrane; sequence DNFNQQKKKLGGQDIFMTEEQKKYYNAMKKLGSKKPQKPIPRPLNKYQGFVFD. Ser1458 carries the post-translational modification Phosphoserine; by PKC. The IV repeat unit spans residues 1465–1764; the sequence is IPRPLNKYQG…WEKFDPEATQ (300 aa). The helical transmembrane segment at 1479-1502 threads the bilayer; sequence IVTKQAFDIVIMVLICLNMITMMV. At 1503–1513 the chain is on the extracellular side; that stretch reads ETDEQSAEKTK. Residues 1514-1537 traverse the membrane as a helical segment; the sequence is ILNKINQFFVAVFTGECVMKMFAL. At 1538–1543 the chain is on the cytoplasmic side; that stretch reads RHYYFT. Residues 1544–1567 form a helical membrane-spanning segment; the sequence is NGWNVFDFIVVVLSIGSLVFSVIL. Over 1568–1579 the chain is Extracellular; it reads TSLENYFSPTLF. A helical; Voltage-sensor membrane pass occupies residues 1580-1601; that stretch reads RVIRLARIGRILRLIRAAKGIR. Residues 1602–1616 are Cytoplasmic-facing; sequence TLLFALMMSLPALFN. A helical membrane pass occupies residues 1617-1639; that stretch reads IGLLLFLVMFIYSIFGMASFPHV. At 1640–1653 the chain is on the extracellular side; the sequence is SWEAGIDDMFNFQT. Residues 1654 to 1676 constitute an intramembrane region (pore-forming); the sequence is FANSMLCLFQITTSAGWDGLLSP. Residues 1677-1704 are Extracellular-facing; sequence ILNTGPPYCDPNLPNSNGSRGNCGSPAV. Asn1693 is a glycosylation site (N-linked (GlcNAc...) asparagine). Residues 1705–1729 traverse the membrane as a helical segment; sequence GILFFTTYIIISFLIVVNMYIAVIL. At 1730-1962 the chain is on the cytoplasmic side; sequence ENFNVATQES…TSKKVTAPGP (233 aa). The IQ domain occupies 1858–1887; sequence EDISATVIQKAYRSYVLHRSMTISNPPAVP. The segment at 1914 to 1962 is disordered; sequence KSETASAASFPPSYDSVTRGLSDQINMSTSSSMQNEDEGTSKKVTAPGP. A compositionally biased stretch (polar residues) spans 1928 to 1947; sequence DSVTRGLSDQINMSTSSSMQ.

The protein belongs to the sodium channel (TC 1.A.1.10) family. Nav1.8/SCN10A subfamily. The channel consists of an ion conducting pore forming alpha-subunit regulated by one or more associated auxiliary subunits SCN1B, SCN2B and SCN3B; electrophysiological properties may vary depending on the type of the associated beta subunits. Found in a number of complexes with PRX, DYNLT1 and PDZD2. Interacts with proteins such as FSTL1, PRX, DYNLT1, PDZD2, S100A10 and many others. Interacts with NEDD4 and NEDD4L. Ubiquitinated by NEDD4L; which promotes its endocytosis. Post-translationally, phosphorylation at Ser-1458 by PKC in a highly conserved cytoplasmic loop slows inactivation of the sodium channel and reduces peak sodium currents. In terms of processing, lacks the cysteine which covalently binds the conotoxin GVIIJ. This cysteine (position 825) is speculated in other sodium channel subunits alpha to be implied in covalent binding with the sodium channel subunit beta-2 or beta-4. In terms of tissue distribution, expressed in nodose ganglia, but not in cortex, hippocampus, cerebellum, liver, heart and skeletal muscle.

The protein resides in the cell membrane. The enzyme catalyses Na(+)(in) = Na(+)(out). Functionally, tetrodotoxin-resistant channel that mediates the voltage-dependent sodium ion permeability of excitable membranes. Assuming opened or closed conformations in response to the voltage difference across the membrane, the protein forms a sodium-selective channel through which sodium ions may pass in accordance with their electrochemical gradient. Plays a role in neuropathic pain mechanisms. The chain is Sodium channel protein type 10 subunit alpha (SCN10A) from Canis lupus familiaris (Dog).